Reading from the N-terminus, the 98-residue chain is Large ribosomal subunit protein uL23c (98 aa).

It belongs to the universal ribosomal protein uL23 family. Part of the 50S ribosomal subunit.

It is found in the plastid. Functionally, binds to 23S rRNA. The chain is Large ribosomal subunit protein uL23c (rpl23) from Euglena longa (Euglenophycean alga).